The sequence spans 380 residues: Queuine tRNA-ribosyltransferase (380 aa).

Asp-96 acts as the Proton acceptor in catalysis. Substrate contacts are provided by residues 96 to 100, Asp-150, Gln-193, and Gly-220; that span reads DSGGF. Residues 251 to 257 form an RNA binding region; it reads GVGAPDS. Asp-270 serves as the catalytic Nucleophile. Residues 275–279 are RNA binding; important for wobble base 34 recognition; the sequence is TRIAR. Zn(2+) contacts are provided by Cys-308, Cys-310, Cys-313, and His-339.

The protein belongs to the queuine tRNA-ribosyltransferase family. Homodimer. Within each dimer, one monomer is responsible for RNA recognition and catalysis, while the other monomer binds to the replacement base PreQ1. The cofactor is Zn(2+).

The enzyme catalyses 7-aminomethyl-7-carbaguanine + guanosine(34) in tRNA = 7-aminomethyl-7-carbaguanosine(34) in tRNA + guanine. Its pathway is tRNA modification; tRNA-queuosine biosynthesis. Functionally, catalyzes the base-exchange of a guanine (G) residue with the queuine precursor 7-aminomethyl-7-deazaguanine (PreQ1) at position 34 (anticodon wobble position) in tRNAs with GU(N) anticodons (tRNA-Asp, -Asn, -His and -Tyr). Catalysis occurs through a double-displacement mechanism. The nucleophile active site attacks the C1' of nucleotide 34 to detach the guanine base from the RNA, forming a covalent enzyme-RNA intermediate. The proton acceptor active site deprotonates the incoming PreQ1, allowing a nucleophilic attack on the C1' of the ribose to form the product. After dissociation, two additional enzymatic reactions on the tRNA convert PreQ1 to queuine (Q), resulting in the hypermodified nucleoside queuosine (7-(((4,5-cis-dihydroxy-2-cyclopenten-1-yl)amino)methyl)-7-deazaguanosine). The sequence is that of Queuine tRNA-ribosyltransferase from Streptococcus agalactiae serotype Ia (strain ATCC 27591 / A909 / CDC SS700).